Here is a 393-residue protein sequence, read N- to C-terminus: S-adenosylmethionine synthase (393 aa).

Residue His16 coordinates ATP. Mg(2+) is bound at residue Asp18. Glu44 contacts K(+). The L-methionine site is built by Glu57 and Gln100. The flexible loop stretch occupies residues 100–110 (QSQDIAQGVDK). Residues 167-169 (DAK), 238-239 (RF), Asp247, 253-254 (RK), Ala270, and Lys274 each bind ATP. Asp247 provides a ligand contact to L-methionine. Lys278 is a binding site for L-methionine.

Belongs to the AdoMet synthase family. As to quaternary structure, homotetramer; dimer of dimers. Mg(2+) is required as a cofactor. Requires K(+) as cofactor.

The protein resides in the cytoplasm. The catalysed reaction is L-methionine + ATP + H2O = S-adenosyl-L-methionine + phosphate + diphosphate. It functions in the pathway amino-acid biosynthesis; S-adenosyl-L-methionine biosynthesis; S-adenosyl-L-methionine from L-methionine: step 1/1. Functionally, catalyzes the formation of S-adenosylmethionine (AdoMet) from methionine and ATP. The overall synthetic reaction is composed of two sequential steps, AdoMet formation and the subsequent tripolyphosphate hydrolysis which occurs prior to release of AdoMet from the enzyme. This Delftia acidovorans (strain DSM 14801 / SPH-1) protein is S-adenosylmethionine synthase.